The sequence spans 416 residues: Isobutyryl-CoA dehydrogenase, mitochondrial (416 aa).

The N-terminal 21 residues, 1 to 21 (MISGLFKLSNKQSVLQNATKL), are a transit peptide targeting the mitochondrion. FAD is bound by residues 156–165 (YCLTEPGSGS) and 189–191 (FIS). Substrate is bound at residue S165. 273–276 (NGGR) lines the substrate pocket. FAD contacts are provided by residues R301, 311–312 (FQ), and 370–374 (QLFGG). The active-site Proton acceptor is the E397. 399-401 (SDA) contributes to the FAD binding site. Residue R409 coordinates substrate.

The protein belongs to the acyl-CoA dehydrogenase family. As to quaternary structure, homotetramer. It depends on FAD as a cofactor.

It localises to the mitochondrion. It catalyses the reaction 2-methylpropanoyl-CoA + oxidized [electron-transfer flavoprotein] + H(+) = 2-methylpropenoyl-CoA + reduced [electron-transfer flavoprotein]. It carries out the reaction (2S)-2-methylbutanoyl-CoA + oxidized [electron-transfer flavoprotein] + H(+) = (2E)-2-methylbut-2-enoyl-CoA + reduced [electron-transfer flavoprotein]. The catalysed reaction is propanoyl-CoA + oxidized [electron-transfer flavoprotein] + H(+) = acryloyl-CoA + reduced [electron-transfer flavoprotein]. It functions in the pathway amino-acid degradation; L-valine degradation. Isobutyryl-CoA dehydrogenase which catalyzes one of the steps of the valine catabolic pathway. To a lesser extent, is also able to catalyze the oxidation of (2S)-2-methylbutanoyl-CoA. The chain is Isobutyryl-CoA dehydrogenase, mitochondrial (acad8) from Dictyostelium discoideum (Social amoeba).